Consider the following 900-residue polypeptide: Exosome complex component 10 homolog (900 aa).

Disordered regions lie at residues 1-31 and 147-174; these read MPRTPKRVHQEAKEESAQADQPPKKSASEDV and TSIEPAVASPQTQGTPKAGSWNRTTGTP. Over residues 8 to 28 the composition is skewed to basic and acidic residues; that stretch reads VHQEAKEESAQADQPPKKSAS. Positions 273 to 438 constitute a 3'-5' exonuclease domain; it reads VVDTVEKLKQ…YVYGRMTNDL (166 aa). Asp-296, Glu-298, Asp-354, and Asp-423 together coordinate Mg(2+). Positions 485 to 565 constitute an HRDC domain; it reads DNRQLYALRG…LKARDQPLVK (81 aa). Residues 731 to 900 form a disordered region; sequence EQLKRKHPQA…FSNVRKEGKK (170 aa). Over residues 809–826 the composition is skewed to basic residues; it reads RKQKKNQFQRGFKAKNRG. Low complexity predominate over residues 878-887; that stretch reads NNRNNKQFNK.

Belongs to the exosome component 10/RRP6 family. As to quaternary structure, component of the RNA exosome complex. Interacts with spn-A/Rad51; the interaction is required for the recruitment of spn-A to the DNA-damage response foci. Interacts with Su(var)3-9, a heterochromatin factor; the interaction promotes association of Rrp6 with a subset of genomic loci. Interacts with Su(var)205, a heterochromatin factor. Interacts with HDAC1, a heterochromatin factor. The cofactor is Mg(2+). As to expression, salivary gland (at protein level).

It is found in the nucleus. The protein localises to the chromosome. Its subcellular location is the cytoplasm. It localises to the cell cortex. The protein resides in the cytoskeleton. It is found in the microtubule organizing center. The protein localises to the centrosome. Its subcellular location is the spindle. It localises to the midbody. Its function is as follows. Catalytic component of the RNA exosome complex which has 3'-&gt;5' exoribonuclease activity and participates in a multitude of cellular RNA processing and degradation events. Degrades a large variety of non-coding RNAs that are processed by the exosome, such as pre-rRNAs and some small nucleolar RNAs (snoRNAs). Degrades transcripts derived from different types of heterochromatic repeats, such as subtelomeric minisatellites and simple gagaa repeats. Degrades transcripts derived from transposons and transposon fragments. Degrades chromatin-associated transcripts and contributes to the compaction of heterochromatin. Required for the efficient repair of DNA double-strand breaks via homologous recombination after irradiation. Required for cell proliferation and error-free mitosis. The sequence is that of Exosome complex component 10 homolog from Drosophila melanogaster (Fruit fly).